The sequence spans 317 residues: DNA-directed RNA polymerase subunit alpha (317 aa).

The segment at 1 to 234 (MKQFNKPEFG…SHFDVFTTLA (234 aa)) is alpha N-terminal domain (alpha-NTD). The tract at residues 249 to 317 (EEKELDKPVE…AALELTFKQN (69 aa)) is alpha C-terminal domain (alpha-CTD).

Belongs to the RNA polymerase alpha chain family. Homodimer. The RNAP catalytic core consists of 2 alpha, 1 beta, 1 beta' and 1 omega subunit. When a sigma factor is associated with the core the holoenzyme is formed, which can initiate transcription.

It carries out the reaction RNA(n) + a ribonucleoside 5'-triphosphate = RNA(n+1) + diphosphate. Functionally, DNA-dependent RNA polymerase catalyzes the transcription of DNA into RNA using the four ribonucleoside triphosphates as substrates. This Mesoplasma florum (strain ATCC 33453 / NBRC 100688 / NCTC 11704 / L1) (Acholeplasma florum) protein is DNA-directed RNA polymerase subunit alpha.